Reading from the N-terminus, the 333-residue chain is Galactinol synthase 1 (333 aa).

K104 is a catalytic residue. 3 residues coordinate Mn(2+): D120, D122, and H257.

The protein belongs to the glycosyltransferase 8 family. Galactosyltransferase subfamily. It depends on a divalent metal cation as a cofactor. In terms of tissue distribution, expressed in source leaves, specifically in the mesophyll.

It is found in the cytoplasm. It catalyses the reaction myo-inositol + UDP-alpha-D-galactose = alpha-D-galactosyl-(1-&gt;3)-1D-myo-inositol + UDP + H(+). Its function is as follows. Major galactinol synthase mainly involved in the biosynthesis of storage raffinose family oligosaccharides (RFOs) that function as osmoprotectants. May promote plant stress tolerance. In Ajuga reptans (Bugle), this protein is Galactinol synthase 1 (GOLS1).